Here is a 77-residue protein sequence, read N- to C-terminus: NAD(P)H-quinone oxidoreductase subunit L (77 aa).

Transmembrane regions (helical) follow at residues 12–32 and 47–67; these read LIAY…LLFY and LGIY…SPFL.

Belongs to the complex I NdhL subunit family. As to quaternary structure, NDH-1 can be composed of about 15 different subunits; different subcomplexes with different compositions have been identified which probably have different functions.

The protein resides in the cellular thylakoid membrane. The catalysed reaction is a plastoquinone + NADH + (n+1) H(+)(in) = a plastoquinol + NAD(+) + n H(+)(out). The enzyme catalyses a plastoquinone + NADPH + (n+1) H(+)(in) = a plastoquinol + NADP(+) + n H(+)(out). In terms of biological role, NDH-1 shuttles electrons from an unknown electron donor, via FMN and iron-sulfur (Fe-S) centers, to quinones in the respiratory and/or the photosynthetic chain. The immediate electron acceptor for the enzyme in this species is believed to be plastoquinone. Couples the redox reaction to proton translocation, and thus conserves the redox energy in a proton gradient. Cyanobacterial NDH-1 also plays a role in inorganic carbon-concentration. In Prochlorococcus marinus (strain MIT 9301), this protein is NAD(P)H-quinone oxidoreductase subunit L.